A 309-amino-acid chain; its full sequence is Ribonuclease Z (309 aa).

The Zn(2+) site is built by His-63, His-65, Asp-67, His-68, His-145, Asp-216, and His-274. Asp-67 (proton acceptor) is an active-site residue.

The protein belongs to the RNase Z family. Homodimer. The cofactor is Zn(2+).

It catalyses the reaction Endonucleolytic cleavage of RNA, removing extra 3' nucleotides from tRNA precursor, generating 3' termini of tRNAs. A 3'-hydroxy group is left at the tRNA terminus and a 5'-phosphoryl group is left at the trailer molecule.. Zinc phosphodiesterase, which displays some tRNA 3'-processing endonuclease activity. Probably involved in tRNA maturation, by removing a 3'-trailer from precursor tRNA. The protein is Ribonuclease Z of Streptococcus agalactiae serotype Ia (strain ATCC 27591 / A909 / CDC SS700).